A 398-amino-acid polypeptide reads, in one-letter code: Membrane-spanning 4-domains subfamily A member 18 (398 aa).

The next 4 helical transmembrane spans lie at 156-176 (LGAI…NPVL), 178-198 (YYPF…SYIV), 218-238 (SISF…IIIT), and 251-271 (AVSG…CVVS). Positions 316 to 346 (TGPVSATNGPVNTTIHPVNTTTSPVNTTTSP) are disordered. The span at 319–331 (VSATNGPVNTTIH) shows a compositional bias: polar residues. The segment covering 332–346 (PVNTTTSPVNTTTSP) has biased composition (low complexity).

It belongs to the MS4A family.

The protein resides in the membrane. The protein is Membrane-spanning 4-domains subfamily A member 18 (MS4A18) of Homo sapiens (Human).